Consider the following 290-residue polypeptide: uncharacterized protein (290 aa).

3 disordered regions span residues 89–157, 172–217, and 261–290; these read CSEN…EELS, MANT…MESS, and TANT…AVKK. Composition is skewed to basic and acidic residues over residues 106–124 and 142–152; these read DFSK…EKQP and KTEKLVSKEPS. Composition is skewed to polar residues over residues 172–183 and 193–202; these read MANTSSSANRTG and KPTTAVQAST. 2 stretches are compositionally biased toward low complexity: residues 207–217 and 274–290; these read MSSAESAMESS and PSSE…AVKK.

This is an uncharacterized protein from Caenorhabditis elegans.